A 258-amino-acid polypeptide reads, in one-letter code: Acetylglutamate kinase (258 aa).

Substrate is bound by residues 41 to 42 (GG), Arg-63, and Asn-156.

The protein belongs to the acetylglutamate kinase family. ArgB subfamily. Homodimer.

Its subcellular location is the cytoplasm. The catalysed reaction is N-acetyl-L-glutamate + ATP = N-acetyl-L-glutamyl 5-phosphate + ADP. It participates in amino-acid biosynthesis; L-arginine biosynthesis; N(2)-acetyl-L-ornithine from L-glutamate: step 2/4. Its function is as follows. Catalyzes the ATP-dependent phosphorylation of N-acetyl-L-glutamate. The polypeptide is Acetylglutamate kinase (Geobacillus stearothermophilus (Bacillus stearothermophilus)).